The following is a 432-amino-acid chain: Glutamate-1-semialdehyde 2,1-aminomutase (432 aa).

At lysine 272 the chain carries N6-(pyridoxal phosphate)lysine.

It belongs to the class-III pyridoxal-phosphate-dependent aminotransferase family. HemL subfamily. In terms of assembly, homodimer. Pyridoxal 5'-phosphate is required as a cofactor.

The protein resides in the cytoplasm. It carries out the reaction (S)-4-amino-5-oxopentanoate = 5-aminolevulinate. Its pathway is porphyrin-containing compound metabolism; protoporphyrin-IX biosynthesis; 5-aminolevulinate from L-glutamyl-tRNA(Glu): step 2/2. The protein operates within porphyrin-containing compound metabolism; chlorophyll biosynthesis. This chain is Glutamate-1-semialdehyde 2,1-aminomutase, found in Nostoc punctiforme (strain ATCC 29133 / PCC 73102).